Reading from the N-terminus, the 467-residue chain is Uronate isomerase (467 aa).

The protein belongs to the metallo-dependent hydrolases superfamily. Uronate isomerase family.

It carries out the reaction D-glucuronate = D-fructuronate. It catalyses the reaction aldehydo-D-galacturonate = keto-D-tagaturonate. Its pathway is carbohydrate metabolism; pentose and glucuronate interconversion. The sequence is that of Uronate isomerase from Solibacter usitatus (strain Ellin6076).